Here is a 55-residue protein sequence, read N- to C-terminus: uncharacterized protein (55 aa).

A run of 2 helical transmembrane segments spans residues 5-25 (LISIVCIAVFFCLNILGMMHM) and 26-46 (LPLYITSPLLFLSILFTLYRL).

It is found in the cell membrane. This is an uncharacterized protein from Bacillus subtilis (strain 168).